We begin with the raw amino-acid sequence, 118 residues long: Large ribosomal subunit protein bL20 (118 aa).

The protein belongs to the bacterial ribosomal protein bL20 family.

In terms of biological role, binds directly to 23S ribosomal RNA and is necessary for the in vitro assembly process of the 50S ribosomal subunit. It is not involved in the protein synthesizing functions of that subunit. This is Large ribosomal subunit protein bL20 from Lactobacillus delbrueckii subsp. bulgaricus (strain ATCC BAA-365 / Lb-18).